Reading from the N-terminus, the 347-residue chain is Sulfate/thiosulfate import ATP-binding protein CysA 1 (347 aa).

Positions Val3–Ile237 constitute an ABC transporter domain. Gly35–Thr42 contributes to the ATP binding site.

Belongs to the ABC transporter superfamily. Sulfate/tungstate importer (TC 3.A.1.6) family. As to quaternary structure, the complex is composed of two ATP-binding proteins (CysA), two transmembrane proteins (CysT and CysW) and a solute-binding protein (CysP).

Its subcellular location is the cell inner membrane. It carries out the reaction sulfate(out) + ATP + H2O = sulfate(in) + ADP + phosphate + H(+). The enzyme catalyses thiosulfate(out) + ATP + H2O = thiosulfate(in) + ADP + phosphate + H(+). Part of the ABC transporter complex CysAWTP involved in sulfate/thiosulfate import. Responsible for energy coupling to the transport system. This chain is Sulfate/thiosulfate import ATP-binding protein CysA 1, found in Rhizobium meliloti (strain 1021) (Ensifer meliloti).